The following is a 447-amino-acid chain: Phosphoglucosamine mutase (447 aa).

Ser-100 functions as the Phosphoserine intermediate in the catalytic mechanism. 4 residues coordinate Mg(2+): Ser-100, Asp-240, Asp-242, and Asp-244. Ser-100 carries the post-translational modification Phosphoserine.

The protein belongs to the phosphohexose mutase family. Mg(2+) serves as cofactor. In terms of processing, activated by phosphorylation.

The enzyme catalyses alpha-D-glucosamine 1-phosphate = D-glucosamine 6-phosphate. Catalyzes the conversion of glucosamine-6-phosphate to glucosamine-1-phosphate. This chain is Phosphoglucosamine mutase, found in Clostridium botulinum (strain Eklund 17B / Type B).